Reading from the N-terminus, the 177-residue chain is GTP-dependent dephospho-CoA kinase (177 aa).

7 residues coordinate GTP: aspartate 48, valine 49, valine 50, aspartate 67, lysine 69, glutamate 124, and aspartate 147.

It belongs to the GTP-dependent DPCK family.

The enzyme catalyses 3'-dephospho-CoA + GTP = GDP + CoA + H(+). Its pathway is cofactor biosynthesis; coenzyme A biosynthesis. In terms of biological role, catalyzes the GTP-dependent phosphorylation of the 3'-hydroxyl group of dephosphocoenzyme A to form coenzyme A (CoA). This is GTP-dependent dephospho-CoA kinase from Thermococcus onnurineus (strain NA1).